Consider the following 362-residue polypeptide: 3-dehydroquinate synthase (362 aa).

Residues 71 to 76 (DGEQYK), 105 to 109 (GVVGD), 129 to 130 (TT), Lys-142, Lys-151, and 169 to 172 (CLKT) each bind NAD(+). Zn(2+) contacts are provided by Glu-184, His-247, and His-264.

It belongs to the sugar phosphate cyclases superfamily. Dehydroquinate synthase family. The cofactor is Co(2+). Zn(2+) serves as cofactor. Requires NAD(+) as cofactor.

It localises to the cytoplasm. The enzyme catalyses 7-phospho-2-dehydro-3-deoxy-D-arabino-heptonate = 3-dehydroquinate + phosphate. It participates in metabolic intermediate biosynthesis; chorismate biosynthesis; chorismate from D-erythrose 4-phosphate and phosphoenolpyruvate: step 2/7. Catalyzes the conversion of 3-deoxy-D-arabino-heptulosonate 7-phosphate (DAHP) to dehydroquinate (DHQ). The sequence is that of 3-dehydroquinate synthase from Shigella flexneri serotype 5b (strain 8401).